Reading from the N-terminus, the 518-residue chain is Calcium-dependent protein kinase 1 (518 aa).

Positions Met1 to Arg10 are enriched in basic residues. A disordered region spans residues Met1–Ala49. A lipid anchor (N-myristoyl glycine) is attached at Gly2. A compositionally biased stretch (pro residues) spans Glu14–Gln25. The span at Pro26 to Arg35 shows a compositional bias: low complexity. Residues Pro36–Ala45 are compositionally biased toward pro residues. Residues Tyr66–Ile324 enclose the Protein kinase domain. ATP is bound by residues Leu72–Thr80 and Lys95. Asp190 functions as the Proton acceptor in the catalytic mechanism. The tract at residues Ala330–Val360 is autoinhibitory domain. 4 consecutive EF-hand domains span residues Glu367–Lys402, Ile403–Leu438, Glu439–Gly474, and Asp475–Glu509. Residues Asp380, Asp382, Ser384, Thr386, Glu391, Asp416, Asp418, Asn420, Thr422, Glu427, Asp452, Asp454, Ser456, Tyr458, Glu463, Asp487, Asp489, Asp491, Arg493, and Glu498 each contribute to the Ca(2+) site.

It belongs to the protein kinase superfamily. Ser/Thr protein kinase family. CDPK subfamily. In terms of tissue distribution, expressed in roots and leaf blades.

It localises to the membrane. It catalyses the reaction L-seryl-[protein] + ATP = O-phospho-L-seryl-[protein] + ADP + H(+). The enzyme catalyses L-threonyl-[protein] + ATP = O-phospho-L-threonyl-[protein] + ADP + H(+). Its activity is regulated as follows. Activated by calcium. Autophosphorylation may play an important role in the regulation of the kinase activity. Functionally, may play a role in signal transduction pathways that involve calcium as a second messenger. The polypeptide is Calcium-dependent protein kinase 1 (Oryza sativa subsp. japonica (Rice)).